A 380-amino-acid polypeptide reads, in one-letter code: Cytochrome b (380 aa).

4 consecutive transmembrane segments (helical) span residues 33 to 53 (FGSLLGICLITQIVTGLFLAM), 77 to 98 (WLIRSTHANGASLFFICIYLHV), 113 to 133 (WNIGVILLMLVMITAFVGYVL), and 178 to 198 (FFAFHFLLPFVISGASIIHLL). Positions 83 and 97 each coordinate heme b. The heme b site is built by His-182 and His-196. His-201 provides a ligand contact to a ubiquinone. 4 helical membrane passes run 226–246 (YKDMLGFLITLTTLAFLTLFT), 288–308 (LGGVLALVSSILVLLLVPILH), 320–340 (ITQMLFWALVADMLILTWIGG), and 347–367 (FMTIGQIASITYFSLFLILIP).

This sequence belongs to the cytochrome b family. In terms of assembly, the cytochrome bc1 complex contains 3 respiratory subunits (MT-CYB, CYC1 and UQCRFS1), 2 core proteins (UQCRC1 and UQCRC2) and probably 6 low-molecular weight proteins. Heme b serves as cofactor.

The protein resides in the mitochondrion inner membrane. Its function is as follows. Component of the ubiquinol-cytochrome c reductase complex (complex III or cytochrome b-c1 complex) that is part of the mitochondrial respiratory chain. The b-c1 complex mediates electron transfer from ubiquinol to cytochrome c. Contributes to the generation of a proton gradient across the mitochondrial membrane that is then used for ATP synthesis. The sequence is that of Cytochrome b (mt-cyb) from Latimeria chalumnae (Coelacanth).